We begin with the raw amino-acid sequence, 105 residues long: NADH-quinone oxidoreductase subunit K (105 aa).

Transmembrane regions (helical) follow at residues 8-28 (LAAYLILGAMLFSIGVVGVFL), 34-54 (IILLMAIELLLLAVNINLVAF), and 65-85 (VFVFFILTVAAAEAAIGLAIL).

The protein belongs to the complex I subunit 4L family. NDH-1 is composed of 14 different subunits. Subunits NuoA, H, J, K, L, M, N constitute the membrane sector of the complex.

The protein localises to the cell inner membrane. The enzyme catalyses a quinone + NADH + 5 H(+)(in) = a quinol + NAD(+) + 4 H(+)(out). In terms of biological role, NDH-1 shuttles electrons from NADH, via FMN and iron-sulfur (Fe-S) centers, to quinones in the respiratory chain. The immediate electron acceptor for the enzyme in this species is believed to be ubiquinone. Couples the redox reaction to proton translocation (for every two electrons transferred, four hydrogen ions are translocated across the cytoplasmic membrane), and thus conserves the redox energy in a proton gradient. This chain is NADH-quinone oxidoreductase subunit K, found in Acidithiobacillus ferrooxidans (strain ATCC 23270 / DSM 14882 / CIP 104768 / NCIMB 8455) (Ferrobacillus ferrooxidans (strain ATCC 23270)).